Reading from the N-terminus, the 828-residue chain is Leucine--tRNA ligase (828 aa).

The short motif at Pro-42–His-52 is the 'HIGH' region element. A 'KMSKS' region motif is present at residues Lys-582 to Ser-586. Lys-585 serves as a coordination point for ATP.

It belongs to the class-I aminoacyl-tRNA synthetase family.

Its subcellular location is the cytoplasm. The enzyme catalyses tRNA(Leu) + L-leucine + ATP = L-leucyl-tRNA(Leu) + AMP + diphosphate. This Petrotoga mobilis (strain DSM 10674 / SJ95) protein is Leucine--tRNA ligase.